Here is a 356-residue protein sequence, read N- to C-terminus: Protein MGF 360-3L (356 aa).

An ANK repeat occupies 61-93 (KLNTALVLAVKENNDDLIMLFTEWGANINYGLL).

It belongs to the asfivirus MGF 360 family.

Its function is as follows. Plays a role in virus cell tropism, and may be required for efficient virus replication in macrophages. The sequence is that of Protein MGF 360-3L from Ornithodoros (relapsing fever ticks).